The sequence spans 187 residues: Protein GrpE (187 aa).

The protein belongs to the GrpE family. As to quaternary structure, homodimer.

It is found in the cytoplasm. Its function is as follows. Participates actively in the response to hyperosmotic and heat shock by preventing the aggregation of stress-denatured proteins, in association with DnaK and GrpE. It is the nucleotide exchange factor for DnaK and may function as a thermosensor. Unfolded proteins bind initially to DnaJ; upon interaction with the DnaJ-bound protein, DnaK hydrolyzes its bound ATP, resulting in the formation of a stable complex. GrpE releases ADP from DnaK; ATP binding to DnaK triggers the release of the substrate protein, thus completing the reaction cycle. Several rounds of ATP-dependent interactions between DnaJ, DnaK and GrpE are required for fully efficient folding. This chain is Protein GrpE, found in Albidiferax ferrireducens (strain ATCC BAA-621 / DSM 15236 / T118) (Rhodoferax ferrireducens).